A 2504-amino-acid polypeptide reads, in one-letter code: Fatty acid synthase (2504 aa).

Methionine 1 bears the N-acetylmethionine mark. A Ketosynthase family 3 (KS3) domain is found at 1-406; sequence MEEVVIAGMS…GSNVHVILQP (406 aa). Position 59 is an N6-acetyllysine (lysine 59). Serine 63 is modified (phosphoserine). Position 70 is an N6-acetyllysine (lysine 70). Catalysis depends on cysteine 161, which acts as the For beta-ketoacyl synthase activity. The residue at position 207 (serine 207) is a Phosphoserine. Catalysis depends on histidine 293, which acts as the For beta-ketoacyl synthase activity. Lysine 298 carries the post-translational modification N6-acetyllysine. The For beta-ketoacyl synthase activity role is filled by histidine 331. An acyl and malonyl transferases region spans residues 429-817; the sequence is RTLEAVQDLL…INVNPNALFP (389 aa). Lysine 528 carries the post-translational modification N6-acetyllysine. Serine 581 functions as the For malonyltransferase activity in the catalytic mechanism. An acyl-CoA-binding positions include 647–648 and phenylalanine 671; that span reads DT. The residue at position 673 (lysine 673) is an N6-acetyllysine. Serine 725 carries the phosphoserine modification. Residue arginine 773 participates in an acyl-CoA binding. An N6-acetyllysine modification is found at lysine 790. The N-terminal hotdog fold stretch occupies residues 844–967; sequence VPVAEDFPNG…VYLWEDPNSK (124 aa). The region spanning 844–1104 is the PKS/mFAS DH domain; it reads VPVAEDFPNG…ISRLQTTATS (261 aa). Histidine 878 (proton acceptor; for dehydratase activity) is an active-site residue. Residues 982 to 1104 are C-terminal hotdog fold; the sequence is SVSRLTQGEV…ISRLQTTATS (123 aa). Lysine 993 is modified (N6-acetyllysine). Aspartate 1032 serves as the catalytic Proton donor; for dehydratase activity. An N6-acetyllysine mark is found at lysine 1071 and lysine 1276. Cysteine 1464 carries the post-translational modification S-nitrosocysteine. 2 positions are modified to phosphoserine: serine 1577 and serine 1587. The segment at 1628 to 1856 is enoyl reductase; it reads DVPSSWTLEE…VQVREEEPEA (229 aa). An NADP(+)-binding site is contributed by 1664-1681; sequence VLIHSGSGGVGQAAISIA. Lysine 1697 carries the N6-(pyridoxal phosphate)lysine; alternate modification. Lysine 1697 carries the post-translational modification N6-acetyllysine; alternate. Residues lysine 1764 and lysine 1840 each carry the N6-acetyllysine modification. The interval 1857–2111 is beta-ketoacyl reductase; the sequence is VLPGAQPTLI…FVLAEKKAVA (255 aa). 1879–1894 serves as a coordination point for NADP(+); the sequence is SYIITGGLGGFGLELA. Lysine 1988 carries the N6-acetyllysine modification. Cysteine 2084 carries the post-translational modification S-nitrosocysteine. Positions 2112 to 2192 constitute a Carrier domain; that stretch reads HGDGDTQRDL…EMSSKTDSAT (81 aa). Position 2150 is an O-(pantetheine 4'-phosphoryl)serine; alternate (serine 2150). Serine 2150 is modified (phosphoserine; alternate). The interval 2181 to 2205 is disordered; it reads LQEMSSKTDSATDTTAPKSRSDTSL. Positions 2185–2198 are enriched in low complexity; sequence SSKTDSATDTTAPK. Residues serine 2190 and serine 2229 each carry the phosphoserine modification. Residues 2201 to 2504 are thioesterase; sequence SDTSLKQNQL…AEPRVSVREG (304 aa). The active-site For thioesterase activity is the serine 2301. Residue lysine 2384 is modified to N6-acetyllysine. Lysine 2442 participates in a covalent cross-link: Glycyl lysine isopeptide (Lys-Gly) (interchain with G-Cter in SUMO2). The active-site For thioesterase activity is the histidine 2474.

In terms of assembly, homodimer which is arranged in a head to tail fashion. Interacts with CEACAM1; this interaction is insulin and phosphorylation-dependent; reduces fatty-acid synthase activity. In terms of processing, S-nitrosylation of Fatty acid synthase at cysteine residues Cys-1464 or Cys-2084 is important for the enzyme dimerization. In adipocytes, S-nitrosylation of Fatty acid synthase occurs under physiological conditions and gradually increases during adipogenesis.

It is found in the cytoplasm. The protein resides in the melanosome. The enzyme catalyses acetyl-CoA + n malonyl-CoA + 2n NADPH + 2n H(+) = a long-chain fatty acid + (n+1) CoA + n CO2 + 2n NADP(+).. The catalysed reaction is holo-[ACP] + acetyl-CoA = acetyl-[ACP] + CoA. It carries out the reaction holo-[ACP] + malonyl-CoA = malonyl-[ACP] + CoA. It catalyses the reaction a fatty acyl-[ACP] + malonyl-[ACP] + H(+) = a 3-oxoacyl-[ACP] + holo-[ACP] + CO2. The enzyme catalyses a (3R)-hydroxyacyl-[ACP] + NADP(+) = a 3-oxoacyl-[ACP] + NADPH + H(+). The catalysed reaction is a (3R)-hydroxyacyl-[ACP] = a (2E)-enoyl-[ACP] + H2O. It carries out the reaction a 2,3-saturated acyl-[ACP] + NADP(+) = a (2E)-enoyl-[ACP] + NADPH + H(+). It catalyses the reaction hexadecanoyl-[ACP] + H2O = hexadecanoate + holo-[ACP] + H(+). The enzyme catalyses acetyl-[ACP] + malonyl-[ACP] + H(+) = 3-oxobutanoyl-[ACP] + holo-[ACP] + CO2. The catalysed reaction is 3-oxobutanoyl-[ACP] + NADPH + H(+) = (3R)-hydroxybutanoyl-[ACP] + NADP(+). It carries out the reaction (3R)-hydroxybutanoyl-[ACP] = (2E)-butenoyl-[ACP] + H2O. It catalyses the reaction (2E)-butenoyl-[ACP] + NADPH + H(+) = butanoyl-[ACP] + NADP(+). The enzyme catalyses butanoyl-[ACP] + malonyl-[ACP] + H(+) = 3-oxohexanoyl-[ACP] + holo-[ACP] + CO2. The catalysed reaction is 3-oxohexanoyl-[ACP] + NADPH + H(+) = (3R)-hydroxyhexanoyl-[ACP] + NADP(+). It carries out the reaction (3R)-hydroxyhexanoyl-[ACP] = (2E)-hexenoyl-[ACP] + H2O. It catalyses the reaction (2E)-hexenoyl-[ACP] + NADPH + H(+) = hexanoyl-[ACP] + NADP(+). The enzyme catalyses hexanoyl-[ACP] + malonyl-[ACP] + H(+) = 3-oxooctanoyl-[ACP] + holo-[ACP] + CO2. The catalysed reaction is 3-oxooctanoyl-[ACP] + NADPH + H(+) = (3R)-hydroxyoctanoyl-[ACP] + NADP(+). It carries out the reaction (3R)-hydroxyoctanoyl-[ACP] = (2E)-octenoyl-[ACP] + H2O. It catalyses the reaction (2E)-octenoyl-[ACP] + NADPH + H(+) = octanoyl-[ACP] + NADP(+). The enzyme catalyses octanoyl-[ACP] + malonyl-[ACP] + H(+) = 3-oxodecanoyl-[ACP] + holo-[ACP] + CO2. The catalysed reaction is 3-oxodecanoyl-[ACP] + NADPH + H(+) = (3R)-hydroxydecanoyl-[ACP] + NADP(+). It carries out the reaction (3R)-hydroxydecanoyl-[ACP] = (2E)-decenoyl-[ACP] + H2O. It catalyses the reaction (2E)-decenoyl-[ACP] + NADPH + H(+) = decanoyl-[ACP] + NADP(+). The enzyme catalyses decanoyl-[ACP] + malonyl-[ACP] + H(+) = 3-oxododecanoyl-[ACP] + holo-[ACP] + CO2. The catalysed reaction is 3-oxododecanoyl-[ACP] + NADPH + H(+) = (3R)-hydroxydodecanoyl-[ACP] + NADP(+). It carries out the reaction (3R)-hydroxydodecanoyl-[ACP] = (2E)-dodecenoyl-[ACP] + H2O. It catalyses the reaction (2E)-dodecenoyl-[ACP] + NADPH + H(+) = dodecanoyl-[ACP] + NADP(+). The enzyme catalyses dodecanoyl-[ACP] + malonyl-[ACP] + H(+) = 3-oxotetradecanoyl-[ACP] + holo-[ACP] + CO2. The catalysed reaction is 3-oxotetradecanoyl-[ACP] + NADPH + H(+) = (3R)-hydroxytetradecanoyl-[ACP] + NADP(+). It carries out the reaction (3R)-hydroxytetradecanoyl-[ACP] = (2E)-tetradecenoyl-[ACP] + H2O. It catalyses the reaction (2E)-tetradecenoyl-[ACP] + NADPH + H(+) = tetradecanoyl-[ACP] + NADP(+). The enzyme catalyses tetradecanoyl-[ACP] + malonyl-[ACP] + H(+) = 3-oxohexadecanoyl-[ACP] + holo-[ACP] + CO2. The catalysed reaction is 3-oxohexadecanoyl-[ACP] + NADPH + H(+) = (3R)-hydroxyhexadecanoyl-[ACP] + NADP(+). It carries out the reaction (3R)-hydroxyhexadecanoyl-[ACP] = (2E)-hexadecenoyl-[ACP] + H2O. It catalyses the reaction (2E)-hexadecenoyl-[ACP] + NADPH + H(+) = hexadecanoyl-[ACP] + NADP(+). The enzyme catalyses hexadecanoyl-[ACP] + malonyl-[ACP] + H(+) = 3-oxooctadecanoyl-[ACP] + holo-[ACP] + CO2. The catalysed reaction is 3-oxooctadecanoyl-[ACP] + NADPH + H(+) = (3R)-hydroxyoctadecanoyl-[ACP] + NADP(+). It carries out the reaction (3R)-hydroxyoctadecanoyl-[ACP] = (2E)-octadecenoyl-[ACP] + H2O. It catalyses the reaction (2E)-octadecenoyl-[ACP] + NADPH + H(+) = octadecanoyl-[ACP] + NADP(+). The enzyme catalyses tetradecanoyl-[ACP] + H2O = tetradecanoate + holo-[ACP] + H(+). Its pathway is lipid metabolism; fatty acid biosynthesis. Functionally, fatty acid synthetase is a multifunctional enzyme that catalyzes the de novo biosynthesis of long-chain saturated fatty acids starting from acetyl-CoA and malonyl-CoA in the presence of NADPH. This multifunctional protein contains 7 catalytic activities and a site for the binding of the prosthetic group 4'-phosphopantetheine of the acyl carrier protein ([ACP]) domain. This is Fatty acid synthase (Fasn) from Mus musculus (Mouse).